Reading from the N-terminus, the 383-residue chain is Lipid-A-disaccharide synthase (383 aa).

It belongs to the LpxB family.

It catalyses the reaction a lipid X + a UDP-2-N,3-O-bis[(3R)-3-hydroxyacyl]-alpha-D-glucosamine = a lipid A disaccharide + UDP + H(+). The protein operates within bacterial outer membrane biogenesis; LPS lipid A biosynthesis. In terms of biological role, condensation of UDP-2,3-diacylglucosamine and 2,3-diacylglucosamine-1-phosphate to form lipid A disaccharide, a precursor of lipid A, a phosphorylated glycolipid that anchors the lipopolysaccharide to the outer membrane of the cell. The polypeptide is Lipid-A-disaccharide synthase (Anaeromyxobacter dehalogenans (strain 2CP-C)).